Here is a 478-residue protein sequence, read N- to C-terminus: Cytochrome c-552 (478 aa).

An N-terminal signal peptide occupies residues 1–26; that stretch reads MTRIKINARRIFSLLIPFFFFTSVHA. His-94 provides a ligand contact to heme c. Residues Cys-122, Cys-125, and Lys-126 each coordinate heme. Heme c is bound by residues Cys-160, Cys-163, His-164, Cys-209, Cys-212, and His-213. Ca(2+) is bound by residues Glu-215, Tyr-216, Lys-261, and Gln-263. Tyr-216 contacts substrate. His-264 is a substrate binding site. The heme c site is built by His-275, Cys-282, Cys-285, His-286, His-301, Cys-314, Cys-317, His-318, and His-393.

It belongs to the cytochrome c-552 family. It depends on Ca(2+) as a cofactor. Heme c serves as cofactor.

Its subcellular location is the periplasm. It carries out the reaction 6 Fe(III)-[cytochrome c] + NH4(+) + 2 H2O = 6 Fe(II)-[cytochrome c] + nitrite + 8 H(+). The protein operates within nitrogen metabolism; nitrate reduction (assimilation). Functionally, catalyzes the reduction of nitrite to ammonia, consuming six electrons in the process. The protein is Cytochrome c-552 of Escherichia coli O9:H4 (strain HS).